The chain runs to 201 residues: Imidazoleglycerol-phosphate dehydratase (201 aa).

Belongs to the imidazoleglycerol-phosphate dehydratase family.

It is found in the cytoplasm. It catalyses the reaction D-erythro-1-(imidazol-4-yl)glycerol 3-phosphate = 3-(imidazol-4-yl)-2-oxopropyl phosphate + H2O. Its pathway is amino-acid biosynthesis; L-histidine biosynthesis; L-histidine from 5-phospho-alpha-D-ribose 1-diphosphate: step 6/9. The sequence is that of Imidazoleglycerol-phosphate dehydratase from Prochlorococcus marinus (strain MIT 9515).